We begin with the raw amino-acid sequence, 156 residues long: Small ribosomal subunit protein uS7 (156 aa).

This sequence belongs to the universal ribosomal protein uS7 family. In terms of assembly, part of the 30S ribosomal subunit. Contacts proteins S9 and S11.

One of the primary rRNA binding proteins, it binds directly to 16S rRNA where it nucleates assembly of the head domain of the 30S subunit. Is located at the subunit interface close to the decoding center, probably blocks exit of the E-site tRNA. The polypeptide is Small ribosomal subunit protein uS7 (Frankia alni (strain DSM 45986 / CECT 9034 / ACN14a)).